A 334-amino-acid chain; its full sequence is L-lactate dehydrogenase B chain (334 aa).

Ala2 bears the N-acetylalanine mark. Position 7 is an N6-acetyllysine (Lys7). 31–53 contributes to the NAD(+) binding site; that stretch reads QVGMACAISILGKSLADELALVD. Ser44 carries the post-translational modification Phosphoserine. N6-acetyllysine is present on Lys58. An NAD(+)-binding site is contributed by Arg100. Arg107 is a binding site for substrate. An N6-acetyllysine modification is found at Lys119. Asn139 contributes to the NAD(+) binding site. Asn139 and Arg170 together coordinate substrate. His194 serves as the catalytic Proton acceptor. Tyr240 is subject to Phosphotyrosine. Position 249 (Thr249) interacts with substrate. An N6-acetyllysine modification is found at Lys329.

Belongs to the LDH/MDH superfamily. LDH family. In terms of assembly, homotetramer. Interacts with PTEN upstream reading frame protein MP31; the interaction leads to inhibition of mitochondrial lactate dehydrogenase activity, preventing conversion of lactate to pyruvate in mitochondria. As to expression, predominantly expressed in aerobic tissues such as cardiac muscle.

The protein localises to the cytoplasm. It is found in the mitochondrion inner membrane. The enzyme catalyses (S)-lactate + NAD(+) = pyruvate + NADH + H(+). The protein operates within fermentation; pyruvate fermentation to lactate; (S)-lactate from pyruvate: step 1/1. In terms of biological role, interconverts simultaneously and stereospecifically pyruvate and lactate with concomitant interconversion of NADH and NAD(+). The sequence is that of L-lactate dehydrogenase B chain (LDHB) from Homo sapiens (Human).